We begin with the raw amino-acid sequence, 411 residues long: Keratin, type I cytoskeletal 12 (411 aa).

The interval 1-42 is head; it reads DHDYEFPGIQAFAGLGMGFGGSPGGGSLYLPSGNDGGLLSGS. The segment at 43–78 is coil 1A; sequence EKETMQNLNDRLASYLDKVRALEDANAELENKIREW. Residues 43-359 form the IF rod domain; the sequence is EKETMQNLND…RLLDGEAQGD (317 aa). The linker 1 stretch occupies residues 83–101; it reads GHGHGDCGPQHDYSKYHPL. The interval 102–193 is coil 1B; it reads IEDLRNKIIS…KNHEEELQSC (92 aa). Positions 194-216 are linker 12; that stretch reads RAGGPGEVSVEMDAAPGVDLTRL. Residues 217 to 354 form a coil 2 region; it reads LNDMRAQYEA…IETYRRLLDG (138 aa). The tract at residues 355–411 is tail; the sequence is EAQGDGLDESSAMTGSRSQAQSIDSSKDPSKTRKIKTIVQEVVNGEVVSSQVQEIQN. The segment at 356-387 is disordered; that stretch reads AQGDGLDESSAMTGSRSQAQSIDSSKDPSKTR. The segment covering 365 to 378 has biased composition (polar residues); the sequence is SAMTGSRSQAQSID.

It belongs to the intermediate filament family. In terms of assembly, heterotetramer of two type I and two type II keratins. Keratin-3 associates with keratin-12. As to expression, cornea specific. Associated mainly with all layers of the central corneal epithelium and also found in the suprabasal limbal epithelium.

Its function is as follows. Involved in corneal epithelium organization, integrity and corneal keratin expression. The polypeptide is Keratin, type I cytoskeletal 12 (KRT12) (Oryctolagus cuniculus (Rabbit)).